We begin with the raw amino-acid sequence, 617 residues long: Hemagglutinin glycoprotein (617 aa).

At 1–37 (MSPQRDRINAFYKDNPHPKGSRIVINREHLMIDRPYV) the chain is on the intravirion side. Positions 1 to 154 (MSPQRDRINA…RIKLDYDQYC (154 aa)) are stalk. Residues 38–58 (LLAVLFVMFLSLIGLLAIAGI) form a helical; Signal-anchor for type II membrane protein membrane-spanning segment. Residues 59-617 (RLHRAAIYTA…VTREDGTNRR (559 aa)) are Virion surface-facing. N-linked (GlcNAc...) asparagine; by host glycosylation is found at N168, N187, N200, N215, and N238. Intrachain disulfides connect C188–C606, C287–C300, C381–C494, C386–C394, and C570–C579. The segment at 458–543 (PMKNLALGVI…VEHAVVYYVY (86 aa)) is interaction with host NECTIN4 receptor.

This sequence belongs to the paramyxoviruses hemagglutinin-neuraminidase family. Non-sialidase subfamily. As to quaternary structure, homodimer; disulfide-linked. Further forms homotetramer (dimer of dimers). Interacts (via C-terminus) with human NECTIN4 (via N-terminus); this interaction allows attachment to the respiratory epithelium and viral entry. Interacts (via C-terminus) with human SLAMF1/CD150 (via N-terminus); this interaction allows attachment and viral entry into the CD150-expressing immune cells. Interacts with human CD46 antigen; this interaction allows attachment and viral entry of vaccine and laboratory-adapted strains.

The protein resides in the virion membrane. The protein localises to the host cell membrane. Functionally, attaches the virus to the human SLAMF1/CD150 receptor for entry into host dendritic cells, macrophages, activated memory T cells and naive or memory B cells, thereby explaining the long immunosuppression that follows infection. In the respiratory airways, binds to the NECTIN4 receptor for entry into the host cell. Binding of H protein to the receptor induces a conformational change that allows the F protein to trigger virion/cell membranes fusion. The vaccine and laboratory-adapted strains use host CD46 as an alternate receptor. The high degree of interaction between H and CD46 results in down-regulation of the latter from the surface of infected cells, rendering them more sensitive to c3b-mediated complement lysis. The sequence is that of Hemagglutinin glycoprotein (H) from Homo sapiens (Human).